The chain runs to 508 residues: ATP synthase subunit alpha, mitochondrial (508 aa).

Glycine 171–threonine 178 is an ATP binding site.

The protein belongs to the ATPase alpha/beta chains family. As to quaternary structure, F-type ATPases have 2 components, CF(1) - the catalytic core - and CF(0) - the membrane proton channel. CF(1) has five subunits: alpha(3), beta(3), gamma(1), delta(1), epsilon(1). CF(0) has three main subunits: a, b and c.

Its subcellular location is the mitochondrion. It is found in the mitochondrion inner membrane. In terms of biological role, mitochondrial membrane ATP synthase (F(1)F(0) ATP synthase or Complex V) produces ATP from ADP in the presence of a proton gradient across the membrane which is generated by electron transport complexes of the respiratory chain. F-type ATPases consist of two structural domains, F(1) - containing the extramembraneous catalytic core, and F(0) - containing the membrane proton channel, linked together by a central stalk and a peripheral stalk. During catalysis, ATP synthesis in the catalytic domain of F(1) is coupled via a rotary mechanism of the central stalk subunits to proton translocation. Subunits alpha and beta form the catalytic core in F(1). Rotation of the central stalk against the surrounding alpha(3)beta(3) subunits leads to hydrolysis of ATP in three separate catalytic sites on the beta subunits. Subunit alpha does not bear the catalytic high-affinity ATP-binding sites. This chain is ATP synthase subunit alpha, mitochondrial (ATPA), found in Phaseolus vulgaris (Kidney bean).